The primary structure comprises 180 residues: MQNPNNLIWIDLEMTGLEPERDVIIEMATIVTDSELNVLAEGPVIAIHQSDETLAGMDEWNTRTHGQSGLTQRVRESRIDTATAEAQTIAFLEQWVPKGKSPICGNSIGQDRRFLYKYMPALEAYFHYRYLDVSTLKILAGMWAPQVKDSFQKTATHQALDDIRESIAELKHYRQHFLKA.

Positions 7-170 (LIWIDLEMTG…DDIRESIAEL (164 aa)) constitute an Exonuclease domain. Residue Tyr128 is part of the active site.

This sequence belongs to the oligoribonuclease family.

It localises to the cytoplasm. Functionally, 3'-to-5' exoribonuclease specific for small oligoribonucleotides. This is Oligoribonuclease from Ectopseudomonas mendocina (strain ymp) (Pseudomonas mendocina).